A 360-amino-acid polypeptide reads, in one-letter code: Photosystem II protein D1 2 (360 aa).

3 consecutive transmembrane segments (helical) span residues 29 to 46, 118 to 133, and 142 to 156; these read YVGW…TATT, HFLI…EWEL, and WICV…AATA. Residue His-118 participates in chlorophyll a binding. Tyr-126 serves as a coordination point for pheophytin a. The [CaMn4O5] cluster site is built by Asp-170 and Glu-189. Residues 197-218 traverse the membrane as a helical segment; it reads FHMLGVAGVFGGSLFSAMHGSL. His-198 provides a ligand contact to chlorophyll a. Residues His-215 and 264–265 contribute to the a quinone site; that span reads SF. His-215 contacts Fe cation. His-272 serves as a coordination point for Fe cation. The helical transmembrane segment at 274–288 threads the bilayer; it reads FLGAWPVVGIWFTAL. Positions 332, 333, 342, and 344 each coordinate [CaMn4O5] cluster. The propeptide occupies 345 to 360; it reads AGEQAPVALQAPAING.

This sequence belongs to the reaction center PufL/M/PsbA/D family. As to quaternary structure, PSII is composed of 1 copy each of membrane proteins PsbA, PsbB, PsbC, PsbD, PsbE, PsbF, PsbH, PsbI, PsbJ, PsbK, PsbL, PsbM, PsbT, PsbX, PsbY, PsbZ, Psb30/Ycf12, peripheral proteins PsbO, CyanoQ (PsbQ), PsbU, PsbV and a large number of cofactors. It forms dimeric complexes. The D1/D2 heterodimer binds P680, chlorophylls that are the primary electron donor of PSII, and subsequent electron acceptors. It shares a non-heme iron and each subunit binds pheophytin, quinone, additional chlorophylls, carotenoids and lipids. D1 provides most of the ligands for the Mn4-Ca-O5 cluster of the oxygen-evolving complex (OEC). There is also a Cl(-1) ion associated with D1 and D2, which is required for oxygen evolution. The PSII complex binds additional chlorophylls, carotenoids and specific lipids. serves as cofactor. Tyr-161 forms a radical intermediate that is referred to as redox-active TyrZ, YZ or Y-Z. In terms of processing, C-terminally processed by CtpA; processing is essential to allow assembly of the oxygen-evolving complex and thus photosynthetic growth.

It localises to the cellular thylakoid membrane. The enzyme catalyses 2 a plastoquinone + 4 hnu + 2 H2O = 2 a plastoquinol + O2. Functionally, photosystem II (PSII) is a light-driven water:plastoquinone oxidoreductase that uses light energy to abstract electrons from H(2)O, generating O(2) and a proton gradient subsequently used for ATP formation. It consists of a core antenna complex that captures photons, and an electron transfer chain that converts photonic excitation into a charge separation. The D1/D2 (PsbA/PsbD) reaction center heterodimer binds P680, the primary electron donor of PSII as well as several subsequent electron acceptors. This chain is Photosystem II protein D1 2, found in Picosynechococcus sp. (strain ATCC 27264 / PCC 7002 / PR-6) (Agmenellum quadruplicatum).